We begin with the raw amino-acid sequence, 308 residues long: Ribosomal RNA small subunit methyltransferase H (308 aa).

S-adenosyl-L-methionine-binding positions include 32 to 34 (GGH), D52, F78, D100, and Q107.

It belongs to the methyltransferase superfamily. RsmH family.

It localises to the cytoplasm. It carries out the reaction cytidine(1402) in 16S rRNA + S-adenosyl-L-methionine = N(4)-methylcytidine(1402) in 16S rRNA + S-adenosyl-L-homocysteine + H(+). In terms of biological role, specifically methylates the N4 position of cytidine in position 1402 (C1402) of 16S rRNA. This chain is Ribosomal RNA small subunit methyltransferase H, found in Legionella pneumophila (strain Paris).